The primary structure comprises 297 residues: 3-mercaptopyruvate sulfurtransferase (297 aa).

A2 is subject to N-acetylalanine. Residues 25 to 144 (SSQPLKLLDA…WLNQNLPISS (120 aa)) form the Rhodanese 1 domain. S35 is modified (phosphoserine). K40 carries the post-translational modification N6-acetyllysine; alternate. K40 is modified (N6-succinyllysine; alternate). The tract at residues 145–160 (GKSHSEPAEFSAQLDP) is hinge. N6-succinyllysine is present on residues K146 and K164. Residues 174–288 (DARRFQVVDA…WYMRAQPEHI (115 aa)) enclose the Rhodanese 2 domain. R188 lines the substrate pocket. C248 acts as the Cysteine persulfide intermediate in catalysis.

As to quaternary structure, monomer (active form). Homodimer; disulfide-linked (inactive form). As to expression, expressed in the brain and retina. In the retina, localized to the inner and outer plexiform layer, the inner and outer nuclear layer and the outer segments of photoreceptors. In the brain, localized to neurons of mitral cell layers, glomerular, and external plexiform layers in the olfactory bulb. Also found in Purkinje cell stomata and proximal dendrites. In the spinal cord, localized to large neurons. In the cerebral cortex, localized to pyramidial neurons in layers II/III and V, and in layers I-VI of neocortical areas. In the hippocampus, found in CA1 and CA3 pyramidal cells.

Its subcellular location is the cytoplasm. The protein localises to the mitochondrion. The protein resides in the synapse. It is found in the synaptosome. It carries out the reaction 2-oxo-3-sulfanylpropanoate + [thioredoxin]-dithiol = [thioredoxin]-disulfide + hydrogen sulfide + pyruvate + H(+). By oxidative stress, and thioredoxin. Under oxidative stress conditions, the catalytic cysteine site is converted to a sulfenate which inhibits the MPST enzyme activity. Reduced thioredoxin cleaves an intersubunit disulfide bond to turn on the redox switch and reactivate the enzyme. Inhibited by different oxidants, hydrogen peroxide and tetrathionate. Transfer of a sulfur ion to cyanide or to other thiol compounds. Also has weak rhodanese activity. Detoxifies cyanide and is required for thiosulfate biosynthesis. Acts as an antioxidant. In combination with cysteine aminotransferase (CAT), contributes to the catabolism of cysteine and is an important producer of hydrogen sulfide in the brain, retina and vascular endothelial cells. Hydrogen sulfide H(2)S is an important synaptic modulator, signaling molecule, smooth muscle contractor and neuroprotectant. Its production by the 3MST/CAT pathway is regulated by calcium ions. The protein is 3-mercaptopyruvate sulfurtransferase (Mpst) of Mus musculus (Mouse).